Consider the following 248-residue polypeptide: 5'-nucleotidase SurE (248 aa).

Positions 8, 9, 39, and 91 each coordinate a divalent metal cation.

This sequence belongs to the SurE nucleotidase family. A divalent metal cation is required as a cofactor.

The protein localises to the cytoplasm. It catalyses the reaction a ribonucleoside 5'-phosphate + H2O = a ribonucleoside + phosphate. Its function is as follows. Nucleotidase that shows phosphatase activity on nucleoside 5'-monophosphates. The chain is 5'-nucleotidase SurE from Pseudoalteromonas atlantica (strain T6c / ATCC BAA-1087).